A 555-amino-acid chain; its full sequence is CTP synthase (555 aa).

Positions 1-267 are amidoligase domain; the sequence is MAKFVFVTGG…CKEVLDCLDL (267 aa). CTP is bound at residue Ser13. Ser13 contributes to the UTP binding site. Residues 14 to 19 and Asp71 contribute to the ATP site; that span reads SIGKGI. The Mg(2+) site is built by Asp71 and Glu141. CTP contacts are provided by residues 148–150, 188–193, and Lys224; these read DIE and KTKPTQ. UTP is bound by residues 188–193 and Lys224; that span reads KTKPTQ. In terms of domain architecture, Glutamine amidotransferase type-1 spans 292 to 534; it reads KVALVGKYVQ…IQAAQIRVPS (243 aa). Residue Gly354 coordinates L-glutamine. Catalysis depends on Cys381, which acts as the Nucleophile; for glutamine hydrolysis. Residues 382 to 385, Glu405, and Arg462 each bind L-glutamine; that span reads LGMQ. Residues His507 and Glu509 contribute to the active site. The tract at residues 536-555 is disordered; that stretch reads PSEAFNPQSKIIEKKSLEQQ. Over residues 546-555 the composition is skewed to basic and acidic residues; the sequence is IIEKKSLEQQ.

This sequence belongs to the CTP synthase family. In terms of assembly, homotetramer.

The enzyme catalyses UTP + L-glutamine + ATP + H2O = CTP + L-glutamate + ADP + phosphate + 2 H(+). It carries out the reaction L-glutamine + H2O = L-glutamate + NH4(+). The catalysed reaction is UTP + NH4(+) + ATP = CTP + ADP + phosphate + 2 H(+). It participates in pyrimidine metabolism; CTP biosynthesis via de novo pathway; CTP from UDP: step 2/2. Its activity is regulated as follows. Allosterically activated by GTP, when glutamine is the substrate; GTP has no effect on the reaction when ammonia is the substrate. The allosteric effector GTP functions by stabilizing the protein conformation that binds the tetrahedral intermediate(s) formed during glutamine hydrolysis. Inhibited by the product CTP, via allosteric rather than competitive inhibition. Functionally, catalyzes the ATP-dependent amination of UTP to CTP with either L-glutamine or ammonia as the source of nitrogen. Regulates intracellular CTP levels through interactions with the four ribonucleotide triphosphates. The sequence is that of CTP synthase from Prochlorococcus marinus (strain NATL1A).